The primary structure comprises 420 residues: Argininosuccinate synthase (420 aa).

ATP is bound at residue 11–19 (AFSGGLDTT). L-citrulline is bound at residue tyrosine 88. An ATP-binding site is contributed by glycine 118. 3 residues coordinate L-aspartate: threonine 120, asparagine 124, and aspartate 125. Asparagine 124 contacts L-citrulline. Positions 128, 174, 183, 257, and 269 each coordinate L-citrulline. The tract at residues 401–420 (KGAAVTDGSGDHAASEDTEE) is disordered. The segment covering 409–420 (SGDHAASEDTEE) has biased composition (basic and acidic residues).

It belongs to the argininosuccinate synthase family. Type 1 subfamily. In terms of assembly, homotetramer.

Its subcellular location is the cytoplasm. It catalyses the reaction L-citrulline + L-aspartate + ATP = 2-(N(omega)-L-arginino)succinate + AMP + diphosphate + H(+). It functions in the pathway amino-acid biosynthesis; L-arginine biosynthesis; L-arginine from L-ornithine and carbamoyl phosphate: step 2/3. In Haloarcula marismortui (strain ATCC 43049 / DSM 3752 / JCM 8966 / VKM B-1809) (Halobacterium marismortui), this protein is Argininosuccinate synthase.